Here is a 256-residue protein sequence, read N- to C-terminus: EF-hand calcium-binding domain-containing protein 4A (256 aa).

A compositionally biased stretch (basic residues) spans 1-10 (MAHLGSRRRM). A disordered region spans residues 1–32 (MAHLGSRRRMSPGLRTRIAHRKAHRTPPSPLI). EF-hand domains follow at residues 41 to 69 (KAHELFQLCDKEDKGLITKRDLQRLQNEL) and 71 to 106 (LTPEQLEAVFDSLDQSNNGYLTPVEFSMGLGKLLGV). Ca(2+) is bound by residues D84, S86, N88, Y90, and E95. The stretch at 190–235 (IRDVHHEKDTLEQALKRKETDHGREVRCLYEEMEQQIKIERERLLK) forms a coiled coil.

Belongs to the EFCAB4 family.

This Xenopus tropicalis (Western clawed frog) protein is EF-hand calcium-binding domain-containing protein 4A (cracr2b).